The primary structure comprises 550 residues: CTP synthase (550 aa).

The interval 1-270 (MTKFVFVTGG…DRLICEELRL (270 aa)) is amidoligase domain. Ser-13 contacts CTP. Ser-13 provides a ligand contact to UTP. Residues 14-19 (SLGKGI) and Asp-71 each bind ATP. Residues Asp-71 and Glu-144 each coordinate Mg(2+). Residues 151–153 (DIE), 191–196 (KTKPTQ), and Lys-227 contribute to the CTP site. Residues 191-196 (KTKPTQ) and Lys-227 each bind UTP. The Glutamine amidotransferase type-1 domain occupies 295 to 547 (TIGMVGKYVD…VEAALASQQR (253 aa)). Gly-356 serves as a coordination point for L-glutamine. The Nucleophile; for glutamine hydrolysis role is filled by Cys-383. Residues 384-387 (LGMQ), Glu-407, and Arg-473 each bind L-glutamine. Active-site residues include His-520 and Glu-522.

This sequence belongs to the CTP synthase family. As to quaternary structure, homotetramer.

It carries out the reaction UTP + L-glutamine + ATP + H2O = CTP + L-glutamate + ADP + phosphate + 2 H(+). The catalysed reaction is L-glutamine + H2O = L-glutamate + NH4(+). The enzyme catalyses UTP + NH4(+) + ATP = CTP + ADP + phosphate + 2 H(+). It participates in pyrimidine metabolism; CTP biosynthesis via de novo pathway; CTP from UDP: step 2/2. With respect to regulation, allosterically activated by GTP, when glutamine is the substrate; GTP has no effect on the reaction when ammonia is the substrate. The allosteric effector GTP functions by stabilizing the protein conformation that binds the tetrahedral intermediate(s) formed during glutamine hydrolysis. Inhibited by the product CTP, via allosteric rather than competitive inhibition. In terms of biological role, catalyzes the ATP-dependent amination of UTP to CTP with either L-glutamine or ammonia as the source of nitrogen. Regulates intracellular CTP levels through interactions with the four ribonucleotide triphosphates. The sequence is that of CTP synthase from Cupriavidus taiwanensis (strain DSM 17343 / BCRC 17206 / CCUG 44338 / CIP 107171 / LMG 19424 / R1) (Ralstonia taiwanensis (strain LMG 19424)).